A 219-amino-acid polypeptide reads, in one-letter code: Glycosylphosphatidylinositol anchor biosynthesis protein 11 (219 aa).

The Cytoplasmic segment spans residues 1–45 (MPAKKRTRKTVKKTVSFSDDTTLTTHQNREKKNVDHDRPPVYVRK). Ser16 is subject to Phosphoserine. Residues 46–66 (TPLMTFPYHLVALLYYYVFVS) form a helical membrane-spanning segment. A topological domain (lumenal) is located at residue Ser67. A helical transmembrane segment spans residues 68-88 (NFNTVKLLSFLIPTQVAYLVL). The Cytoplasmic portion of the chain corresponds to 89–108 (QFNKCTVYGNKIIKINYSLT). The chain crosses the membrane as a helical span at residues 109 to 129 (IICLGVTFLLSFPTMLLTILF). The Lumenal portion of the chain corresponds to 130–135 (GAPLMD). A helical transmembrane segment spans residues 136 to 156 (LLWETWLLSLHFAFLAYPAVY). Residues 157–170 (SVFNCDFKVGLWKK) lie on the Cytoplasmic side of the membrane. Residues 171-191 (YFIFIVVGGWISCVVIPLDWD) traverse the membrane as a helical segment. Residues 192–198 (RDWQNWP) lie on the Lumenal side of the membrane. Residues 199-217 (IPIVVGGYLGALVGYTIGA) traverse the membrane as a helical segment. Topologically, residues 218 to 219 (YI) are cytoplasmic.

The protein belongs to the PIGF family.

The protein resides in the endoplasmic reticulum membrane. It functions in the pathway glycolipid biosynthesis; glycosylphosphatidylinositol-anchor biosynthesis. Functionally, acts in the GPI biosynthetic pathway between GlcNAc-PI synthesis and GPI transfer to protein. Required for the formation of complete GPI precursors CP1 and CP2. The polypeptide is Glycosylphosphatidylinositol anchor biosynthesis protein 11 (GPI11) (Saccharomyces cerevisiae (strain ATCC 204508 / S288c) (Baker's yeast)).